Reading from the N-terminus, the 292-residue chain is Phosphatidylserine decarboxylase proenzyme (292 aa).

Residues aspartate 98, histidine 153, and serine 254 each act as charge relay system; for autoendoproteolytic cleavage activity in the active site. Serine 254 (schiff-base intermediate with substrate; via pyruvic acid; for decarboxylase activity) is an active-site residue. Serine 254 is subject to Pyruvic acid (Ser); by autocatalysis.

This sequence belongs to the phosphatidylserine decarboxylase family. PSD-B subfamily. Prokaryotic type I sub-subfamily. Heterodimer of a large membrane-associated beta subunit and a small pyruvoyl-containing alpha subunit. It depends on pyruvate as a cofactor. Is synthesized initially as an inactive proenzyme. Formation of the active enzyme involves a self-maturation process in which the active site pyruvoyl group is generated from an internal serine residue via an autocatalytic post-translational modification. Two non-identical subunits are generated from the proenzyme in this reaction, and the pyruvate is formed at the N-terminus of the alpha chain, which is derived from the carboxyl end of the proenzyme. The autoendoproteolytic cleavage occurs by a canonical serine protease mechanism, in which the side chain hydroxyl group of the serine supplies its oxygen atom to form the C-terminus of the beta chain, while the remainder of the serine residue undergoes an oxidative deamination to produce ammonia and the pyruvoyl prosthetic group on the alpha chain. During this reaction, the Ser that is part of the protease active site of the proenzyme becomes the pyruvoyl prosthetic group, which constitutes an essential element of the active site of the mature decarboxylase.

It is found in the cell membrane. It carries out the reaction a 1,2-diacyl-sn-glycero-3-phospho-L-serine + H(+) = a 1,2-diacyl-sn-glycero-3-phosphoethanolamine + CO2. It functions in the pathway phospholipid metabolism; phosphatidylethanolamine biosynthesis; phosphatidylethanolamine from CDP-diacylglycerol: step 2/2. Catalyzes the formation of phosphatidylethanolamine (PtdEtn) from phosphatidylserine (PtdSer). This chain is Phosphatidylserine decarboxylase proenzyme, found in Halorhodospira halophila (strain DSM 244 / SL1) (Ectothiorhodospira halophila (strain DSM 244 / SL1)).